We begin with the raw amino-acid sequence, 334 residues long: Protein-methionine-sulfoxide reductase catalytic subunit MsrP (334 aa).

A signal peptide (tat-type signal) is located at residues 1–44 (MKKNQFLKESDVTAESVFFMKRRQVLKALGISAAALSLPHAAHA). Mo-molybdopterin-binding positions include asparagine 88, 91–92 (YE), cysteine 146, threonine 181, asparagine 233, arginine 238, and 249–251 (GIK).

It belongs to the MsrP family. Heterodimer of a catalytic subunit (MsrP) and a heme-binding subunit (MsrQ). The cofactor is Mo-molybdopterin. Predicted to be exported by the Tat system. The position of the signal peptide cleavage has not been experimentally proven.

It is found in the periplasm. It catalyses the reaction L-methionyl-[protein] + a quinone + H2O = L-methionyl-(S)-S-oxide-[protein] + a quinol. It carries out the reaction L-methionyl-[protein] + a quinone + H2O = L-methionyl-(R)-S-oxide-[protein] + a quinol. Its function is as follows. Part of the MsrPQ system that repairs oxidized periplasmic proteins containing methionine sulfoxide residues (Met-O), using respiratory chain electrons. Thus protects these proteins from oxidative-stress damage caused by reactive species of oxygen and chlorine generated by the host defense mechanisms. MsrPQ is essential for the maintenance of envelope integrity under bleach stress, rescuing a wide series of structurally unrelated periplasmic proteins from methionine oxidation, including the primary periplasmic chaperone SurA and the lipoprotein Pal. The catalytic subunit MsrP is non-stereospecific, being able to reduce both (R-) and (S-) diastereoisomers of methionine sulfoxide. This Escherichia coli O81 (strain ED1a) protein is Protein-methionine-sulfoxide reductase catalytic subunit MsrP.